Consider the following 165-residue polypeptide: Inorganic pyrophosphatase (165 aa).

Lys-21, Arg-35, and Tyr-47 together coordinate substrate. 3 residues coordinate Mg(2+): Asp-57, Asp-62, and Asp-94. Residue Tyr-131 participates in substrate binding.

This sequence belongs to the PPase family. As to quaternary structure, homohexamer. Mg(2+) is required as a cofactor.

It localises to the cytoplasm. The enzyme catalyses diphosphate + H2O = 2 phosphate + H(+). Functionally, catalyzes the hydrolysis of inorganic pyrophosphate (PPi) forming two phosphate ions. In Geobacillus stearothermophilus (Bacillus stearothermophilus), this protein is Inorganic pyrophosphatase.